Consider the following 304-residue polypeptide: Pyridoxal 5'-phosphate synthase subunit PdxS (304 aa).

Aspartate 34 is a binding site for D-ribose 5-phosphate. Catalysis depends on lysine 91, which acts as the Schiff-base intermediate with D-ribose 5-phosphate. Glycine 163 lines the D-ribose 5-phosphate pocket. Position 175 (arginine 175) interacts with D-glyceraldehyde 3-phosphate. D-ribose 5-phosphate contacts are provided by residues glycine 224 and 245-246 (GS).

Belongs to the PdxS/SNZ family. In terms of assembly, in the presence of PdxT, forms a dodecamer of heterodimers.

It carries out the reaction aldehydo-D-ribose 5-phosphate + D-glyceraldehyde 3-phosphate + L-glutamine = pyridoxal 5'-phosphate + L-glutamate + phosphate + 3 H2O + H(+). It participates in cofactor biosynthesis; pyridoxal 5'-phosphate biosynthesis. In terms of biological role, catalyzes the formation of pyridoxal 5'-phosphate from ribose 5-phosphate (RBP), glyceraldehyde 3-phosphate (G3P) and ammonia. The ammonia is provided by the PdxT subunit. Can also use ribulose 5-phosphate and dihydroxyacetone phosphate as substrates, resulting from enzyme-catalyzed isomerization of RBP and G3P, respectively. The chain is Pyridoxal 5'-phosphate synthase subunit PdxS from Cutibacterium acnes (strain DSM 16379 / KPA171202) (Propionibacterium acnes).